Reading from the N-terminus, the 379-residue chain is UPF0754 membrane protein ABC1518 (379 aa).

The next 2 helical transmembrane spans lie at 1-21 (MHWI…GAAT) and 358-378 (LLGG…VHFF).

It belongs to the UPF0754 family.

The protein localises to the cell membrane. In Shouchella clausii (strain KSM-K16) (Alkalihalobacillus clausii), this protein is UPF0754 membrane protein ABC1518.